The chain runs to 97 residues: Mitochondrial import inner membrane translocase subunit Tim8 A (97 aa).

Positions 43-66 (CWEKCMDKPGPKLDSRAEACFVNC) match the Twin CX3C motif motif. 2 disulfide bridges follow: Cys-43-Cys-66 and Cys-47-Cys-62. A phosphoserine mark is found at Ser-57, Ser-87, Ser-94, and Ser-96.

Belongs to the small Tim family. Heterohexamer; composed of 3 copies of TIMM8A and 3 copies of TIMM13, named soluble 70 kDa complex. Associates with the TIM22 complex, whose core is composed of TIMM22. As to expression, highly expressed in fetal and adult brain, followed by fetal lung, liver and kidney. Also expressed in heart, placenta, lung, liver, kidney, pancreas, skeletal muscle and heart.

Its subcellular location is the mitochondrion inner membrane. Mitochondrial intermembrane chaperone that participates in the import and insertion of some multi-pass transmembrane proteins into the mitochondrial inner membrane. Also required for the transfer of beta-barrel precursors from the TOM complex to the sorting and assembly machinery (SAM complex) of the outer membrane. Acts as a chaperone-like protein that protects the hydrophobic precursors from aggregation and guide them through the mitochondrial intermembrane space. The TIMM8-TIMM13 complex mediates the import of proteins such as TIMM23, SLC25A12/ARALAR1 and SLC25A13/ARALAR2, while the predominant TIMM9-TIMM10 70 kDa complex mediates the import of much more proteins. Probably necessary for normal neurologic development. The polypeptide is Mitochondrial import inner membrane translocase subunit Tim8 A (TIMM8A) (Homo sapiens (Human)).